Reading from the N-terminus, the 320-residue chain is ATP-dependent 6-phosphofructokinase (320 aa).

Gly11 provides a ligand contact to ATP. ADP is bound at residue 21–25; the sequence is RAIAR. Residues 72-73 and 102-105 contribute to the ATP site; these read RF and GDGS. Asp103 serves as a coordination point for Mg(2+). Residues 125–127, Arg162, and 169–171 contribute to the substrate site; these read TID and MGR. Asp127 serves as the catalytic Proton acceptor. ADP-binding positions include 185–187 and 213–215; these read GAD and KDH. Residues Glu222, Arg243, and 249–252 contribute to the substrate site; that span reads HIQR.

It belongs to the phosphofructokinase type A (PFKA) family. ATP-dependent PFK group I subfamily. Prokaryotic clade 'B1' sub-subfamily. As to quaternary structure, homotetramer. It depends on Mg(2+) as a cofactor.

It localises to the cytoplasm. The catalysed reaction is beta-D-fructose 6-phosphate + ATP = beta-D-fructose 1,6-bisphosphate + ADP + H(+). The protein operates within carbohydrate degradation; glycolysis; D-glyceraldehyde 3-phosphate and glycerone phosphate from D-glucose: step 3/4. Allosterically activated by ADP and other diphosphonucleosides, and allosterically inhibited by phosphoenolpyruvate. In terms of biological role, catalyzes the phosphorylation of D-fructose 6-phosphate to fructose 1,6-bisphosphate by ATP, the first committing step of glycolysis. This is ATP-dependent 6-phosphofructokinase from Ligilactobacillus salivarius (strain UCC118) (Lactobacillus salivarius).